The following is a 416-amino-acid chain: UDP-N-acetylglucosamine 1-carboxyvinyltransferase (416 aa).

22–23 (KN) is a binding site for phosphoenolpyruvate. Residue R92 coordinates UDP-N-acetyl-alpha-D-glucosamine. C116 acts as the Proton donor in catalysis. Residue C116 is modified to 2-(S-cysteinyl)pyruvic acid O-phosphothioketal. UDP-N-acetyl-alpha-D-glucosamine is bound by residues 121-125 (RPVDQ), D304, and I326.

The protein belongs to the EPSP synthase family. MurA subfamily.

It is found in the cytoplasm. The enzyme catalyses phosphoenolpyruvate + UDP-N-acetyl-alpha-D-glucosamine = UDP-N-acetyl-3-O-(1-carboxyvinyl)-alpha-D-glucosamine + phosphate. The protein operates within cell wall biogenesis; peptidoglycan biosynthesis. Cell wall formation. Adds enolpyruvyl to UDP-N-acetylglucosamine. This Janthinobacterium sp. (strain Marseille) (Minibacterium massiliensis) protein is UDP-N-acetylglucosamine 1-carboxyvinyltransferase.